The chain runs to 218 residues: 2-phospho-L-lactate guanylyltransferase (218 aa).

Belongs to the CofC family. Homodimer.

It catalyses the reaction (2S)-2-phospholactate + GTP + H(+) = (2S)-lactyl-2-diphospho-5'-guanosine + diphosphate. Its pathway is cofactor biosynthesis; coenzyme F420 biosynthesis. In terms of biological role, guanylyltransferase that catalyzes the activation of (2S)-2-phospholactate (2-PL) as (2S)-lactyl-2-diphospho-5'-guanosine, via the condensation of 2-PL with GTP. It is involved in the biosynthesis of coenzyme F420, a hydride carrier cofactor. This is 2-phospho-L-lactate guanylyltransferase from Methanocaldococcus fervens (strain DSM 4213 / JCM 15782 / AG86) (Methanococcus fervens).